The following is a 351-amino-acid chain: O-methyltransferase apf6 (351 aa).

S-adenosyl-L-methionine contacts are provided by residues 231 to 232, 279 to 280, and Arg295; these read GG and NF. His299 functions as the Proton acceptor in the catalytic mechanism.

It belongs to the class I-like SAM-binding methyltransferase superfamily. Cation-independent O-methyltransferase family.

Its pathway is secondary metabolite biosynthesis. O-methyltransferase; part of the gene cluster that mediates the biosynthesis of the cyclic tetrapeptide apicidin F (APF). The non-ribosomal peptide synthetase apf1 incorporates four different amino acids to produce apicidin F: L-phenylalanine, D-pipecolic acid (D-pip), N-methoxy-L-tryptophan and L-2-aminooctanedioic acid. L-Phenylalanine is the only proteinogenic amino acid directly used by apf1. The 3 other apf1 substrates are non-proteinogenic and have to be modified by other enzymes of the cluster. Lysine is converted to delta-1-pyrroline-5-carboxylate (P5C) which is reduced to L-pipecolic acid (L-pip) by apf3. L-pip is epimerized to D-pip, probably by apf1 activity, prior to incorporation. L-Tryptophan is N-oxidyzed by one of the cytochrome P450 monooxygenases (apf7 or apf8), and further methylated at the hydroxy group by the O-methyltransferase apf6 to yield N-methoxy-L-tryptophan. The synthesis of the fourth apf1 substrate is more complex. The fatty acid synthase apf5 is involved in the synthesis of the octanoic acid backbone of L-2-aminooctanedioic acid by fixing one acetyl-CoA unit and three malonyl-CoA units. Then one of the cytochrome P450 monooxygenases (apf7 or apf8) may oxidize this backbone to 2-oxooctanoic acid. The aminotransferase apf4 is predicted to catalyze the exchange of the keto group with an amino group. The next step would be the oxidation of 2-aminooctanoic acid by one of the cytochrome P450 monooxygenases (apf7 or apf8). The last step is the oxidation of 2-amino-8-hydroxyoctanoic acid to 2-aminooctanedioic acid is catalyzed by the FAD-dependent monooxygenase apf9. The protein is O-methyltransferase apf6 of Gibberella fujikuroi (strain CBS 195.34 / IMI 58289 / NRRL A-6831) (Bakanae and foot rot disease fungus).